The chain runs to 555 residues: Adenine deaminase (555 aa).

This sequence belongs to the metallo-dependent hydrolases superfamily. Adenine deaminase family. Requires Mn(2+) as cofactor.

The enzyme catalyses adenine + H2O + H(+) = hypoxanthine + NH4(+). The protein is Adenine deaminase of Methanosarcina mazei (strain ATCC BAA-159 / DSM 3647 / Goe1 / Go1 / JCM 11833 / OCM 88) (Methanosarcina frisia).